Consider the following 440-residue polypeptide: Adenylosuccinate lyase (440 aa).

N(6)-(1,2-dicarboxyethyl)-AMP-binding positions include 4 to 5, 67 to 69, and 93 to 94; these read RY, KHD, and TS. Residue His-141 is the Proton donor/acceptor of the active site. Gln-212 serves as a coordination point for N(6)-(1,2-dicarboxyethyl)-AMP. Catalysis depends on Ser-262, which acts as the Proton donor/acceptor. Residues Ser-263, 268–270, Asn-276, and 307–311 contribute to the N(6)-(1,2-dicarboxyethyl)-AMP site; these read KRN and SVERF.

Belongs to the lyase 1 family. Adenylosuccinate lyase subfamily. Homotetramer. Residues from neighboring subunits contribute catalytic and substrate-binding residues to each active site.

The enzyme catalyses N(6)-(1,2-dicarboxyethyl)-AMP = fumarate + AMP. It carries out the reaction (2S)-2-[5-amino-1-(5-phospho-beta-D-ribosyl)imidazole-4-carboxamido]succinate = 5-amino-1-(5-phospho-beta-D-ribosyl)imidazole-4-carboxamide + fumarate. Its pathway is purine metabolism; AMP biosynthesis via de novo pathway; AMP from IMP: step 2/2. It participates in purine metabolism; IMP biosynthesis via de novo pathway; 5-amino-1-(5-phospho-D-ribosyl)imidazole-4-carboxamide from 5-amino-1-(5-phospho-D-ribosyl)imidazole-4-carboxylate: step 2/2. Catalyzes two reactions in de novo purine nucleotide biosynthesis. Catalyzes the breakdown of 5-aminoimidazole- (N-succinylocarboxamide) ribotide (SAICAR or 2-[5-amino-1-(5-phospho-beta-D-ribosyl)imidazole-4-carboxamido]succinate) to 5-aminoimidazole-4-carboxamide ribotide (AICAR or 5-amino-1-(5-phospho-beta-D-ribosyl)imidazole-4-carboxamide) and fumarate, and of adenylosuccinate (ADS or N(6)-(1,2-dicarboxyethyl)-AMP) to adenosine monophosphate (AMP) and fumarate. This is Adenylosuccinate lyase (purB) from Helicobacter pylori (strain J99 / ATCC 700824) (Campylobacter pylori J99).